Reading from the N-terminus, the 140-residue chain is Large ribosomal subunit protein uL11 (140 aa).

This sequence belongs to the universal ribosomal protein uL11 family. In terms of assembly, part of the ribosomal stalk of the 50S ribosomal subunit. Interacts with L10 and the large rRNA to form the base of the stalk. L10 forms an elongated spine to which L12 dimers bind in a sequential fashion forming a multimeric L10(L12)X complex. In terms of processing, one or more lysine residues are methylated.

Functionally, forms part of the ribosomal stalk which helps the ribosome interact with GTP-bound translation factors. This Dehalococcoides mccartyi (strain ATCC BAA-2266 / KCTC 15142 / 195) (Dehalococcoides ethenogenes (strain 195)) protein is Large ribosomal subunit protein uL11.